Reading from the N-terminus, the 395-residue chain is Ankyrin repeat domain-containing protein 65 (395 aa).

10 ANK repeats span residues 52–81 (QAWG…SVEE), 85–114 (AGRT…QVGA), 118–147 (AGRT…PANA), 151–180 (AGLT…PGPT), 185–212 (RGWT…GGAR), 213–241 (LDSV…PVDA), 245–274 (VGAT…DPSL), 278–307 (HGRS…EVDS), 311–340 (LGLT…EINA), and 344–373 (LHKT…SPTL).

The protein is Ankyrin repeat domain-containing protein 65 (ANKRD65) of Bos taurus (Bovine).